Reading from the N-terminus, the 162-residue chain is Protein cornichon homolog 2 (162 aa).

Residues 1 to 10 are Cytoplasmic-facing; it reads MAFTFAAFCY. Residues 11 to 31 form a helical membrane-spanning segment; it reads MLTLVLCASLIFFIIWHIIAF. Residues 32 to 72 are Lumenal-facing; the sequence is DELRTDFKNPIEQGNPSRARERVKNVERICCLLRKLVVPEY. Residues 73–93 traverse the membrane as a helical segment; that stretch reads CIHGLFCLMFMCAAEWVTLGL. Topologically, residues 94–138 are cytoplasmic; it reads NIPLLFYHLWRYFHRPADGSEVMFDPVSIMNVDILNYCQKEAWCK. Residues 139–161 form a helical membrane-spanning segment; it reads LAFYLLSFFYYLYRVGATVRYVS. A topological domain (lumenal) is located at residue Ala-162.

It belongs to the cornichon family.

The protein resides in the membrane. Functionally, regulates the trafficking and gating properties of AMPA-selective glutamate receptors (AMPARs). The chain is Protein cornichon homolog 2 (cnih2) from Xenopus tropicalis (Western clawed frog).